The primary structure comprises 501 residues: Cyclin-dependent kinase 19 (501 aa).

N-acetylmethionine is present on Met1. The 315-residue stretch at 21–335 (EYEGCKVGRG…SEQALQDPYF (315 aa)) folds into the Protein kinase domain. Residues 27–35 (VGRGTYGHV) and Lys52 contribute to the ATP site. Residue Asp151 is the Proton acceptor of the active site. Positions 362-501 (DEPEEKGDKN…YHSSHQTHRY (140 aa)) are disordered. Low complexity predominate over residues 371 to 392 (NQPQQQNPHQQPAAPAQQTAAP). The segment covering 408–421 (TAGGATAGGGGAGA) has biased composition (gly residues). A Phosphoserine modification is found at Ser449. Positions 467-495 (YQSSVQGSSQSQSTLGYSSSQQSTQYHSS) are enriched in low complexity.

Belongs to the protein kinase superfamily. CMGC Ser/Thr protein kinase family. CDC2/CDKX subfamily.

It localises to the cytoplasm. The protein localises to the perinuclear region. The protein resides in the nucleus. The enzyme catalyses L-seryl-[protein] + ATP = O-phospho-L-seryl-[protein] + ADP + H(+). The catalysed reaction is L-threonyl-[protein] + ATP = O-phospho-L-threonyl-[protein] + ADP + H(+). This Mus musculus (Mouse) protein is Cyclin-dependent kinase 19 (Cdk19).